Here is an 84-residue protein sequence, read N- to C-terminus: UPF0291 protein SMU_447 (84 aa).

A disordered region spans residues 57 to 84 (EGNDITPAKLKEIQRQKGIHGRKPEDNS).

It belongs to the UPF0291 family.

It is found in the cytoplasm. In Streptococcus mutans serotype c (strain ATCC 700610 / UA159), this protein is UPF0291 protein SMU_447.